We begin with the raw amino-acid sequence, 284 residues long: 2-dehydro-3-deoxyphosphooctonate aldolase (284 aa).

The protein belongs to the KdsA family.

It is found in the cytoplasm. It carries out the reaction D-arabinose 5-phosphate + phosphoenolpyruvate + H2O = 3-deoxy-alpha-D-manno-2-octulosonate-8-phosphate + phosphate. Its pathway is carbohydrate biosynthesis; 3-deoxy-D-manno-octulosonate biosynthesis; 3-deoxy-D-manno-octulosonate from D-ribulose 5-phosphate: step 2/3. The protein operates within bacterial outer membrane biogenesis; lipopolysaccharide biosynthesis. The polypeptide is 2-dehydro-3-deoxyphosphooctonate aldolase (Yersinia pseudotuberculosis serotype O:1b (strain IP 31758)).